A 317-amino-acid chain; its full sequence is Beta-ketoacyl-[acyl-carrier-protein] synthase III (317 aa).

Residues Cys-112 and His-244 contribute to the active site. The interval Gln-245–Arg-249 is ACP-binding. The active site involves Asn-274.

It belongs to the thiolase-like superfamily. FabH family. As to quaternary structure, homodimer.

Its subcellular location is the cytoplasm. It carries out the reaction malonyl-[ACP] + acetyl-CoA + H(+) = 3-oxobutanoyl-[ACP] + CO2 + CoA. Its pathway is lipid metabolism; fatty acid biosynthesis. Its function is as follows. Catalyzes the condensation reaction of fatty acid synthesis by the addition to an acyl acceptor of two carbons from malonyl-ACP. Catalyzes the first condensation reaction which initiates fatty acid synthesis and may therefore play a role in governing the total rate of fatty acid production. Possesses both acetoacetyl-ACP synthase and acetyl transacylase activities. Its substrate specificity determines the biosynthesis of branched-chain and/or straight-chain of fatty acids. The sequence is that of Beta-ketoacyl-[acyl-carrier-protein] synthase III from Rickettsia bellii (strain OSU 85-389).